We begin with the raw amino-acid sequence, 2185 residues long: Genome polyprotein (2185 aa).

Glycine 2 is lipidated: N-myristoyl glycine; by host. Residues 2-1495 (GAQVSTQKTG…HVSRAFICLQ (1494 aa)) are Cytoplasmic-facing. The interval 566 to 582 (FYQGPPGEAVERAIARV) is amphipathic alpha-helix. Catalysis depends on for protease 2A activity residues histidine 872 and aspartate 890. Residues cysteine 907 and cysteine 909 each contribute to the Zn(2+) site. Cysteine 961 serves as the catalytic For protease 2A activity. Residues cysteine 967 and histidine 969 each contribute to the Zn(2+) site. Positions 1101 to 1173 (NNNWLKKFTE…EQSAPSQSDQ (73 aa)) are membrane-binding. The interval 1101-1239 (NNNWLKKFTE…SPGAGKSVAT (139 aa)) is oligomerization. Positions 1122 to 1126 (AVKIQ) are RNA-binding. Residues 1205-1361 (EKKMSNYIQF…SMYSQNGKIN (157 aa)) form the SF3 helicase domain. Zn(2+) is bound by residues cysteine 1369, cysteine 1381, and cysteine 1386. A C4-type; degenerate zinc finger spans residues 1369-1386 (CDEECCPVNFKRCCPLVC). Residues 1413-1420 (EYNHRHSV) are RNA-binding. Positions 1424-1429 (LEALFQ) are oligomerization. The stretch at 1496-1511 (ALTTFVSVAGIIYIIY) is an intramembrane region. Residues 1512 to 2185 (KLFAGFQGAY…TLRRKWLDSF (674 aa)) lie on the Cytoplasmic side of the membrane. Position 1521 is an O-(5'-phospho-RNA)-tyrosine (tyrosine 1521). The Peptidase C3 domain maps to 1541–1719 (GPAFEFAVAM…FSAALLKHYF (179 aa)). Catalysis depends on for protease 3C activity residues histidine 1580, glutamate 1611, and cysteine 1687. In terms of domain architecture, RdRp catalytic spans 1950-2066 (GHLIAFDYSG…SYPWPIDASL (117 aa)). 2 residues coordinate Mg(2+): aspartate 1956 and aspartate 2052.

The protein belongs to the picornaviruses polyprotein family. Interacts with capsid protein VP1 and capsid protein VP3 to form heterotrimeric protomers. In terms of assembly, interacts with capsid protein VP0, and capsid protein VP3 to form heterotrimeric protomers. Five protomers subsequently associate to form pentamers which serve as building blocks for the capsid. Interacts with capsid protein VP2, capsid protein VP3 and capsid protein VP4 following cleavage of capsid protein VP0. As to quaternary structure, interacts with capsid protein VP1 and capsid protein VP3 in the mature capsid. Interacts with capsid protein VP0 and capsid protein VP1 to form heterotrimeric protomers. Five protomers subsequently associate to form pentamers which serve as building blocks for the capsid. Interacts with capsid protein VP4 in the mature capsid. Interacts with protein 2C; this interaction may be important for virion morphogenesis. In terms of assembly, interacts with capsid protein VP1 and capsid protein VP3. As to quaternary structure, homodimer. Homohexamer; forms a hexameric ring structure with 6-fold symmetry characteristic of AAA+ ATPases. Interacts (via N-terminus) with host RTN3 (via reticulon domain); this interaction is important for viral replication. Interacts with capsid protein VP3; this interaction may be important for virion morphogenesis. In terms of assembly, interacts with protein 3CD. As to quaternary structure, homodimer. Interacts with host GBF1. Interacts (via GOLD domain) with host ACBD3 (via GOLD domain); this interaction allows the formation of a viral protein 3A/ACBD3 heterotetramer with a 2:2 stoichiometry, which will stimulate the recruitment of host PI4KB in order to synthesize PI4P at the viral RNA replication sites. Interacts with RNA-directed RNA polymerase. In terms of assembly, interacts with protein 3AB and with RNA-directed RNA polymerase. As to quaternary structure, interacts with Viral protein genome-linked and with protein 3CD. It depends on Mg(2+) as a cofactor. In terms of processing, specific enzymatic cleavages in vivo by the viral proteases yield processing intermediates and the mature proteins. Myristoylation is required for the formation of pentamers during virus assembly. Further assembly of 12 pentamers and a molecule of genomic RNA generates the provirion. Post-translationally, during virion maturation, immature virions are rendered infectious following cleavage of VP0 into VP4 and VP2. This maturation seems to be an autocatalytic event triggered by the presence of RNA in the capsid and it is followed by a conformational change infectious virion. In terms of processing, myristoylation is required during RNA encapsidation and formation of the mature virus particle. VPg is uridylylated by the polymerase into VPg-pUpU. This acts as a nucleotide-peptide primer for the genomic RNA replication.

It localises to the virion. It is found in the host cytoplasm. The protein resides in the host cytoplasmic vesicle membrane. The protein localises to the host nucleus. It carries out the reaction a ribonucleoside 5'-triphosphate + H2O = a ribonucleoside 5'-diphosphate + phosphate + H(+). The enzyme catalyses Selective cleavage of Tyr-|-Gly bond in the picornavirus polyprotein.. The catalysed reaction is RNA(n) + a ribonucleoside 5'-triphosphate = RNA(n+1) + diphosphate. It catalyses the reaction Selective cleavage of Gln-|-Gly bond in the poliovirus polyprotein. In other picornavirus reactions Glu may be substituted for Gln, and Ser or Thr for Gly.. Its activity is regulated as follows. Replication or transcription is subject to high level of random mutations by the nucleotide analog ribavirin. Its function is as follows. Forms an icosahedral capsid of pseudo T=3 symmetry with capsid proteins VP2 and VP3. The capsid is 300 Angstroms in diameter, composed of 60 copies of each capsid protein and enclosing the viral positive strand RNA genome. Capsid protein VP1 mainly forms the vertices of the capsid. Capsid protein VP1 interacts with host cell receptor to provide virion attachment to target host cells. This attachment induces virion internalization. Tyrosine kinases are probably involved in the entry process. After binding to its receptor, the capsid undergoes conformational changes. Capsid protein VP1 N-terminus (that contains an amphipathic alpha-helix) and capsid protein VP4 are externalized. Together, they shape a pore in the host membrane through which viral genome is translocated to host cell cytoplasm. Functionally, forms an icosahedral capsid of pseudo T=3 symmetry with capsid proteins VP2 and VP3. The capsid is 300 Angstroms in diameter, composed of 60 copies of each capsid protein and enclosing the viral positive strand RNA genome. Lies on the inner surface of the capsid shell. After binding to the host receptor, the capsid undergoes conformational changes. Capsid protein VP4 is released, Capsid protein VP1 N-terminus is externalized, and together, they shape a pore in the host membrane through which the viral genome is translocated into the host cell cytoplasm. In terms of biological role, component of immature procapsids, which is cleaved into capsid proteins VP4 and VP2 after maturation. Allows the capsid to remain inactive before the maturation step. Its function is as follows. Cysteine protease that cleaves viral polyprotein and specific host proteins. It is responsible for the autocatalytic cleavage between the P1 and P2 regions, which is the first cleavage occurring in the polyprotein. Also cleaves the host translation initiation factor EIF4G1, in order to shut down the capped cellular mRNA translation. Inhibits the host nucleus-cytoplasm protein and RNA trafficking by cleaving host members of the nuclear pores. Counteracts stress granule formation probably by antagonizing its assembly or promoting its dissassembly. Cleaves and inhibits host IFIH1/MDA5, thereby inhibiting the type-I IFN production and the establishment of the antiviral state. Cleaves and inhibits host MAVS, thereby inhibiting the type-I IFN production and the establishment of the antiviral state. Functionally, plays an essential role in the virus replication cycle by acting as a viroporin. Creates a pore in the host endoplasmic reticulum and as a consequence releases Ca2+ in the cytoplasm of infected cell. In turn, high levels of cytoplasmic calcium may trigger membrane trafficking and transport of viral ER-associated proteins to viroplasms, sites of viral genome replication. Induces and associates with structural rearrangements of intracellular membranes. Displays RNA-binding, nucleotide binding and NTPase activities. May play a role in virion morphogenesis and viral RNA encapsidation by interacting with the capsid protein VP3. In terms of biological role, localizes the viral replication complex to the surface of membranous vesicles. Together with protein 3CD binds the Cis-Active RNA Element (CRE) which is involved in RNA synthesis initiation. Acts as a cofactor to stimulate the activity of 3D polymerase, maybe through a nucleid acid chaperone activity. Its function is as follows. Localizes the viral replication complex to the surface of membranous vesicles. It inhibits host cell endoplasmic reticulum-to-Golgi apparatus transport and causes the disassembly of the Golgi complex, possibly through GBF1 interaction. This would result in depletion of MHC, trail receptors and IFN receptors at the host cell surface. Plays an essential role in viral RNA replication by recruiting ACBD3 and PI4KB at the viral replication sites, thereby allowing the formation of the rearranged membranous structures where viral replication takes place. Functionally, acts as a primer for viral RNA replication and remains covalently bound to viral genomic RNA. VPg is uridylylated prior to priming replication into VPg-pUpU. The oriI viral genomic sequence may act as a template for this. The VPg-pUpU is then used as primer on the genomic RNA poly(A) by the RNA-dependent RNA polymerase to replicate the viral genome. During genome replication, the VPg-RNA linkage is removed by the host TDP2, thereby accelerating replication. During the late stage of the replication cycle, host TDP2 is excluded from sites of viral RNA synthesis and encapsidation, allowing for the generation of progeny virions. Involved in the viral replication complex and viral polypeptide maturation. It exhibits protease activity with a specificity and catalytic efficiency that is different from protease 3C. Protein 3CD lacks polymerase activity. Protein 3CD binds to the 5'UTR of the viral genome. In terms of biological role, replicates the viral genomic RNA on the surface of intracellular membranes. May form linear arrays of subunits that propagate along a strong head-to-tail interaction called interface-I. Covalently attaches UMP to a tyrosine of VPg, which is used to prime RNA synthesis. The positive stranded RNA genome is first replicated at virus induced membranous vesicles, creating a dsRNA genomic replication form. This dsRNA is then used as template to synthesize positive stranded RNA genomes. ss(+)RNA genomes are either translated, replicated or encapsidated. Its function is as follows. Major viral protease that mediates proteolytic processing of the polyprotein. Cleaves host EIF5B, contributing to host translation shutoff. Also cleaves host PABPC1, contributing to host translation shutoff. Cleaves host NLRP1, triggers host N-glycine-mediated degradation of the autoinhibitory NLRP1 N-terminal fragment. The sequence is that of Genome polyprotein from Homo sapiens (Human).